The following is an 882-amino-acid chain: Envelope glycoprotein gp160 (882 aa).

An N-terminal signal peptide occupies residues Met1–Cys22. The Extracellular segment spans residues Ile23 to Gly697. A glycan (N-linked (GlcNAc...) asparagine; by host) is linked at Asn37. Cys44 and Cys57 are oxidised to a cystine. N-linked (GlcNAc...) asparagine; by host glycans are attached at residues Asn70, Asn114, Asn149, Asn159, Asn174, Asn187, Asn201, Asn205, Asn215, Asn247, Asn250, Asn257, Asn281, Asn287, Asn298, Asn309, Asn319, Asn374, and Asn380. 5 cysteine pairs are disulfide-bonded: Cys101–Cys223, Cys108–Cys214, Cys113–Cys171, Cys236–Cys266, and Cys246–Cys258. The segment at Cys113–Ser170 is V1. Positions Cys171–Cys214 are V2. The segment at Cys314–Trp346 is V3. Cys314 and Cys347 form a disulfide bridge. Cystine bridges form between Cys398/Cys462 and Cys405/Cys435. Residues Cys405–Cys435 form a V4 region. Residues Asn463, Asn474, and Asn479 are each glycosylated (N-linked (GlcNAc...) asparagine; by host). Residues Gly478 to Met485 form a V5 region. The tract at residues Gly529–Ala549 is fusion peptide. Residues Leu592–Gln608 form an immunosuppression region. Residues Asn628, Asn637, and Asn653 are each glycosylated (N-linked (GlcNAc...) asparagine; by host). Residues Asn637 to Met669 adopt a coiled-coil conformation. The interval Lys674 to Gln695 is MPER; binding to GalCer. Residues Ile698–Ala718 traverse the membrane as a helical segment. Topologically, residues Arg719–Leu882 are cytoplasmic. A YXXV motif; contains endocytosis signal motif is present at residues Tyr724–Val727. Residues Thr738–Gly761 are disordered. A lipid anchor (S-palmitoyl cysteine; by host) is attached at Cys790. A Di-leucine internalization motif motif is present at residues Leu881–Leu882.

In terms of assembly, the mature envelope protein (Env) consists of a homotrimer of non-covalently associated gp120-gp41 heterodimers. The resulting complex protrudes from the virus surface as a spike. Interacts with host CD4 and CCR5. Gp120 also interacts with the C-type lectins CD209/DC-SIGN and CLEC4M/DC-SIGNR (collectively referred to as DC-SIGN(R)). The mature envelope protein (Env) consists of a homotrimer of non-covalently associated gp120-gp41 heterodimers. The resulting complex protrudes from the virus surface as a spike. Post-translationally, specific enzymatic cleavages in vivo yield mature proteins. Envelope glycoproteins are synthesized as an inactive precursor that is heavily N-glycosylated and processed likely by host cell furin in the Golgi to yield the mature SU and TM proteins. The cleavage site between SU and TM requires the minimal sequence [KR]-X-[KR]-R. In terms of processing, palmitoylation of the transmembrane protein and of Env polyprotein (prior to its proteolytic cleavage) is essential for their association with host cell membrane lipid rafts. Palmitoylation is therefore required for envelope trafficking to classical lipid rafts, but not for viral replication.

Its subcellular location is the virion membrane. The protein localises to the host cell membrane. The protein resides in the host endosome membrane. The surface protein gp120 (SU) attaches the virus to the host lymphoid cell by binding to the primary receptor CD4. This interaction induces a structural rearrangement creating a high affinity binding site for a chemokine coreceptor like CCR5. This peculiar 2 stage receptor-interaction strategy allows gp120 to maintain the highly conserved coreceptor-binding site in a cryptic conformation, protected from neutralizing antibodies. These changes are transmitted to the transmembrane protein gp41 and are thought to activate its fusogenic potential by unmasking its fusion peptide. Its function is as follows. Surface protein gp120 (SU) may target the virus to gut-associated lymphoid tissue (GALT) by binding host ITGA4/ITGB7 (alpha-4/beta-7 integrins), a complex that mediates T-cell migration to the GALT. Interaction between gp120 and ITGA4/ITGB7 would allow the virus to enter GALT early in the infection, infecting and killing most of GALT's resting CD4+ T-cells. This T-cell depletion is believed to be the major insult to the host immune system leading to AIDS. In terms of biological role, the surface protein gp120 is a ligand for CD209/DC-SIGN and CLEC4M/DC-SIGNR, which are respectively found on dendritic cells (DCs), and on endothelial cells of liver sinusoids and lymph node sinuses. These interactions allow capture of viral particles at mucosal surfaces by these cells and subsequent transmission to permissive cells. DCs are professional antigen presenting cells, critical for host immunity by inducing specific immune responses against a broad variety of pathogens. They act as sentinels in various tissues where they take up antigen, process it, and present it to T-cells following migration to lymphoid organs. SIV subverts the migration properties of dendritic cells to gain access to CD4+ T-cells in lymph nodes. Virus transmission to permissive T-cells occurs either in trans (without DCs infection, through viral capture and transmission), or in cis (following DCs productive infection, through the usual CD4-gp120 interaction), thereby inducing a robust infection. In trans infection, bound virions remain infectious over days and it is proposed that they are not degraded, but protected in non-lysosomal acidic organelles within the DCs close to the cell membrane thus contributing to the viral infectious potential during DCs' migration from the periphery to the lymphoid tissues. On arrival at lymphoid tissues, intact virions recycle back to DCs' cell surface allowing virus transmission to CD4+ T-cells. Virion capture also seems to lead to MHC-II-restricted viral antigen presentation, and probably to the activation of SIV-specific CD4+ cells. Functionally, the transmembrane protein gp41 (TM) acts as a class I viral fusion protein. Under the current model, the protein has at least 3 conformational states: pre-fusion native state, pre-hairpin intermediate state, and post-fusion hairpin state. During fusion of viral and target intracellular membranes, the coiled coil regions (heptad repeats) assume a trimer-of-hairpins structure, positioning the fusion peptide in close proximity to the C-terminal region of the ectodomain. The formation of this structure appears to drive apposition and subsequent fusion of viral and target cell membranes. Complete fusion occurs in host cell endosomes. The virus undergoes clathrin-dependent internalization long before endosomal fusion, thus minimizing the surface exposure of conserved viral epitopes during fusion and reducing the efficacy of inhibitors targeting these epitopes. Membranes fusion leads to delivery of the nucleocapsid into the cytoplasm. The envelope glycoprotein gp160 precursor down-modulates cell surface CD4 antigen by interacting with it in the endoplasmic reticulum and blocking its transport to the cell surface. Its function is as follows. The gp120-gp41 heterodimer allows rapid transcytosis of the virus through CD4 negative cells such as simple epithelial monolayers of the intestinal, rectal and endocervical epithelial barriers. Both gp120 and gp41 specifically recognize glycosphingolipids galactosyl-ceramide (GalCer) or 3' sulfo-galactosyl-ceramide (GalS) present in the lipid rafts structures of epithelial cells. Binding to these alternative receptors allows the rapid transcytosis of the virus through the epithelial cells. This transcytotic vesicle-mediated transport of virions from the apical side to the basolateral side of the epithelial cells does not involve infection of the cells themselves. The chain is Envelope glycoprotein gp160 (env) from Simian immunodeficiency virus (isolate Mm142-83) (SIV-mac).